The chain runs to 473 residues: Photosystem II CP43 reaction center protein (473 aa).

A propeptide spanning residues 1–14 is cleaved from the precursor; it reads MKTLYSLRRFYPVE. An N-acetylthreonine modification is found at T15. Residue T15 is modified to Phosphothreonine. 5 helical membrane-spanning segments follow: residues 69–93, 134–155, 178–200, 255–275, and 291–312; these read LFEVAHFVPEKPMYEQGLILLPHLA, LLGPETLEESFPFFGYVWKDRN, KALYFGGVYDTWAPGGGDVRKIT, KPFAWARRALVWSGEAYLSYS, and WFNNTAYPSEFYGPTGPEASQA. Position 367 (E367) interacts with [CaMn4O5] cluster. The helical transmembrane segment at 447–471 threads the bilayer; it reads RARAAAAGFEKGIDRDFEPVLSMTP.

This sequence belongs to the PsbB/PsbC family. PsbC subfamily. As to quaternary structure, PSII is composed of 1 copy each of membrane proteins PsbA, PsbB, PsbC, PsbD, PsbE, PsbF, PsbH, PsbI, PsbJ, PsbK, PsbL, PsbM, PsbT, PsbX, PsbY, PsbZ, Psb30/Ycf12, at least 3 peripheral proteins of the oxygen-evolving complex and a large number of cofactors. It forms dimeric complexes. Binds multiple chlorophylls and provides some of the ligands for the Ca-4Mn-5O cluster of the oxygen-evolving complex. It may also provide a ligand for a Cl- that is required for oxygen evolution. PSII binds additional chlorophylls, carotenoids and specific lipids. serves as cofactor.

The protein localises to the plastid. It is found in the chloroplast thylakoid membrane. One of the components of the core complex of photosystem II (PSII). It binds chlorophyll and helps catalyze the primary light-induced photochemical processes of PSII. PSII is a light-driven water:plastoquinone oxidoreductase, using light energy to abstract electrons from H(2)O, generating O(2) and a proton gradient subsequently used for ATP formation. This Gossypium hirsutum (Upland cotton) protein is Photosystem II CP43 reaction center protein.